The primary structure comprises 270 residues: Putative pyruvate, phosphate dikinase regulatory protein (270 aa).

Residue 148–155 (GISRTSKT) coordinates ADP.

It belongs to the pyruvate, phosphate/water dikinase regulatory protein family. PDRP subfamily.

The catalysed reaction is N(tele)-phospho-L-histidyl/L-threonyl-[pyruvate, phosphate dikinase] + ADP = N(tele)-phospho-L-histidyl/O-phospho-L-threonyl-[pyruvate, phosphate dikinase] + AMP + H(+). It catalyses the reaction N(tele)-phospho-L-histidyl/O-phospho-L-threonyl-[pyruvate, phosphate dikinase] + phosphate + H(+) = N(tele)-phospho-L-histidyl/L-threonyl-[pyruvate, phosphate dikinase] + diphosphate. Its function is as follows. Bifunctional serine/threonine kinase and phosphorylase involved in the regulation of the pyruvate, phosphate dikinase (PPDK) by catalyzing its phosphorylation/dephosphorylation. This Bacillus cereus (strain AH187) protein is Putative pyruvate, phosphate dikinase regulatory protein.